Reading from the N-terminus, the 254-residue chain is Phosphate import ATP-binding protein PstB 2 (254 aa).

The region spanning 9-249 (FNIDNLNLFY…PRDDRTRGYV (241 aa)) is the ABC transporter domain. Residue 41–48 (GPSGCGKS) participates in ATP binding.

It belongs to the ABC transporter superfamily. Phosphate importer (TC 3.A.1.7) family. As to quaternary structure, the complex is composed of two ATP-binding proteins (PstB), two transmembrane proteins (PstC and PstA) and a solute-binding protein (PstS).

The protein resides in the cell inner membrane. The catalysed reaction is phosphate(out) + ATP + H2O = ADP + 2 phosphate(in) + H(+). Its function is as follows. Part of the ABC transporter complex PstSACB involved in phosphate import. Responsible for energy coupling to the transport system. The chain is Phosphate import ATP-binding protein PstB 2 from Photobacterium profundum (strain SS9).